The following is a 28-amino-acid chain: Taicatoxin, alpha-neurotoxin-like component (28 aa).

Cys3 and Cys21 are disulfide-bonded.

The protein belongs to the three-finger toxin family. Long-chain subfamily. Type II alpha-neurotoxin sub-subfamily. As to quaternary structure, heterotrimer composed of this alpha-neurotoxin-like peptide of 8 kDa, a neurotoxic phospholipase of 16 kDa (AC Q7LZG2) and a serine protease inhibitor of 7 kDa (AC B7S4N9) at an approximate stoichiometry of 1:1:4; non-covalently linked. In terms of tissue distribution, expressed by the venom gland.

It is found in the secreted. In terms of biological role, the heterotrimer blocks the voltage-dependent L-type calcium channels (Cav1/CACNA1) from the heart, and the small conductance calcium-activated potassium channels (KCa2/KCNN) in the chromaffin cells and in the brain. Is very toxic to mice. This chain is Taicatoxin, alpha-neurotoxin-like component, found in Oxyuranus scutellatus scutellatus (Australian taipan).